Consider the following 287-residue polypeptide: Polyamine aminopropyltransferase (287 aa).

Residues G9–I242 enclose the PABS domain. Position 36 (Q36) interacts with S-methyl-5'-thioadenosine. Spermidine-binding residues include H67 and D91. S-methyl-5'-thioadenosine contacts are provided by residues E111 and N143–G144. The Proton acceptor role is filled by D162. P169 is a binding site for S-methyl-5'-thioadenosine.

The protein belongs to the spermidine/spermine synthase family. In terms of assembly, homodimer or homotetramer.

Its subcellular location is the cytoplasm. It carries out the reaction S-adenosyl 3-(methylsulfanyl)propylamine + putrescine = S-methyl-5'-thioadenosine + spermidine + H(+). It participates in amine and polyamine biosynthesis; spermidine biosynthesis; spermidine from putrescine: step 1/1. Functionally, catalyzes the irreversible transfer of a propylamine group from the amino donor S-adenosylmethioninamine (decarboxy-AdoMet) to putrescine (1,4-diaminobutane) to yield spermidine. This chain is Polyamine aminopropyltransferase, found in Prochlorococcus marinus (strain SARG / CCMP1375 / SS120).